The following is a 482-amino-acid chain: Methylenetetrahydrofolate--tRNA-(uracil-5-)-methyltransferase TrmFO (482 aa).

11–16 serves as a coordination point for FAD; that stretch reads GAGLAG.

This sequence belongs to the MnmG family. TrmFO subfamily. The cofactor is FAD.

It localises to the cytoplasm. It carries out the reaction uridine(54) in tRNA + (6R)-5,10-methylene-5,6,7,8-tetrahydrofolate + NADH + H(+) = 5-methyluridine(54) in tRNA + (6S)-5,6,7,8-tetrahydrofolate + NAD(+). It catalyses the reaction uridine(54) in tRNA + (6R)-5,10-methylene-5,6,7,8-tetrahydrofolate + NADPH + H(+) = 5-methyluridine(54) in tRNA + (6S)-5,6,7,8-tetrahydrofolate + NADP(+). In terms of biological role, catalyzes the folate-dependent formation of 5-methyl-uridine at position 54 (M-5-U54) in all tRNAs. The sequence is that of Methylenetetrahydrofolate--tRNA-(uracil-5-)-methyltransferase TrmFO from Nitratidesulfovibrio vulgaris (strain DP4) (Desulfovibrio vulgaris).